The primary structure comprises 433 residues: Histidinol dehydrogenase (433 aa).

NAD(+) contacts are provided by Tyr130, Gln191, and Asn214. The substrate site is built by Ser237, Gln259, and His262. Residues Gln259 and His262 each contribute to the Zn(2+) site. Catalysis depends on proton acceptor residues Glu327 and His328. Substrate-binding residues include His328, Asp361, Glu415, and His420. Residue Asp361 participates in Zn(2+) binding. Position 420 (His420) interacts with Zn(2+).

This sequence belongs to the histidinol dehydrogenase family. It depends on Zn(2+) as a cofactor.

It catalyses the reaction L-histidinol + 2 NAD(+) + H2O = L-histidine + 2 NADH + 3 H(+). Its pathway is amino-acid biosynthesis; L-histidine biosynthesis; L-histidine from 5-phospho-alpha-D-ribose 1-diphosphate: step 9/9. Its function is as follows. Catalyzes the sequential NAD-dependent oxidations of L-histidinol to L-histidinaldehyde and then to L-histidine. This is Histidinol dehydrogenase from Ruegeria pomeroyi (strain ATCC 700808 / DSM 15171 / DSS-3) (Silicibacter pomeroyi).